Here is a 128-residue protein sequence, read N- to C-terminus: MALSKEELIEAIENMTVLELSELVKALEERFGVSATAVAAAPAAAGAAGAEAAAAEEEKTEFDVILQDAGAKKIQVIKEVRAATGLGLKEAKALVDEAPNPVKEGLPKEEAEALKAKLEEAGATVELK.

It belongs to the bacterial ribosomal protein bL12 family. In terms of assembly, homodimer. Part of the ribosomal stalk of the 50S ribosomal subunit. Forms a multimeric L10(L12)X complex, where L10 forms an elongated spine to which 2 to 4 L12 dimers bind in a sequential fashion. Binds GTP-bound translation factors.

Forms part of the ribosomal stalk which helps the ribosome interact with GTP-bound translation factors. Is thus essential for accurate translation. In Rubrobacter xylanophilus (strain DSM 9941 / JCM 11954 / NBRC 16129 / PRD-1), this protein is Large ribosomal subunit protein bL12.